A 254-amino-acid polypeptide reads, in one-letter code: tRNA (guanine-N(1)-)-methyltransferase (254 aa).

S-adenosyl-L-methionine contacts are provided by residues Gly-117 and 136–141 (LGDFVL).

This sequence belongs to the RNA methyltransferase TrmD family. Homodimer.

It localises to the cytoplasm. The enzyme catalyses guanosine(37) in tRNA + S-adenosyl-L-methionine = N(1)-methylguanosine(37) in tRNA + S-adenosyl-L-homocysteine + H(+). Its function is as follows. Specifically methylates guanosine-37 in various tRNAs. The protein is tRNA (guanine-N(1)-)-methyltransferase of Levilactobacillus brevis (strain ATCC 367 / BCRC 12310 / CIP 105137 / JCM 1170 / LMG 11437 / NCIMB 947 / NCTC 947) (Lactobacillus brevis).